The primary structure comprises 64 residues: Alpha-conotoxin-like Lp1.8 (64 aa).

An N-terminal signal peptide occupies residues 1–21 (MGMRMMFTMFLLVVLTTTVVS). A propeptide spanning residues 22 to 41 (FNSDRESNHENRRTSNQITR) is cleaved from the precursor. Disulfide bonds link Cys-47-Cys-53 and Cys-48-Cys-61. A lacks the Ser-Xaa-Pro motif that is crucial for potent interaction with nAChR region spans residues 49-51 (KDP).

The protein belongs to the conotoxin A superfamily. In terms of tissue distribution, expressed by the venom duct.

Its subcellular location is the secreted. Functionally, alpha-conotoxins act on postsynaptic membranes, they bind to the nicotinic acetylcholine receptors (nAChR) and thus inhibit them. Has possibly a distinct nAChR binding mode from other alpha-conotoxins, due to a different three residue motif (Lys-Xaa-Pro instead of the conserved Ser-Xaa-Pro motif). This Conus leopardus (Leopard cone) protein is Alpha-conotoxin-like Lp1.8.